Consider the following 434-residue polypeptide: CBL-interacting protein kinase 15 (434 aa).

The 256-residue stretch at 12–267 (YELGRLLGKG…IQKIKESTWF (256 aa)) folds into the Protein kinase domain. Residues 18 to 26 (LGKGTFGKV) and Lys41 each bind ATP. Asp135 (proton acceptor) is an active-site residue. Residues 153–182 (DFGLSALSESKRQDGLLHTTCGTPAYVAPE) form an activation loop region. Residues 298–333 (RKKNAHEDVKPMSVTNLNAFEIISFSKGFDLSGMFI) enclose the NAF domain. The interval 338–367 (RNEARFTSDKSASTIISKLEDVAKALNLRV) is PPI.

Belongs to the protein kinase superfamily. CAMK Ser/Thr protein kinase family. SNF1 subfamily. Mn(2+) is required as a cofactor.

The catalysed reaction is L-seryl-[protein] + ATP = O-phospho-L-seryl-[protein] + ADP + H(+). It carries out the reaction L-threonyl-[protein] + ATP = O-phospho-L-threonyl-[protein] + ADP + H(+). Involved in salt stress tolerance. CIPK serine-threonine protein kinases interact with CBL proteins. Binding of a CBL protein to the regulatory NAF domain of CIPK protein lead to the activation of the kinase in a calcium-dependent manner. The polypeptide is CBL-interacting protein kinase 15 (CIPK15) (Oryza sativa subsp. japonica (Rice)).